A 305-amino-acid chain; its full sequence is Sulfate adenylyltransferase subunit 2 (305 aa).

The disordered stretch occupies residues 283–305; it reads RQGRVIDHDQSASMEKKKQEGYF.

The protein belongs to the PAPS reductase family. CysD subfamily. In terms of assembly, heterodimer composed of CysD, the smaller subunit, and CysN.

It catalyses the reaction sulfate + ATP + H(+) = adenosine 5'-phosphosulfate + diphosphate. The protein operates within sulfur metabolism; hydrogen sulfide biosynthesis; sulfite from sulfate: step 1/3. Functionally, with CysN forms the ATP sulfurylase (ATPS) that catalyzes the adenylation of sulfate producing adenosine 5'-phosphosulfate (APS) and diphosphate, the first enzymatic step in sulfur assimilation pathway. APS synthesis involves the formation of a high-energy phosphoric-sulfuric acid anhydride bond driven by GTP hydrolysis by CysN coupled to ATP hydrolysis by CysD. The polypeptide is Sulfate adenylyltransferase subunit 2 (Caulobacter sp. (strain K31)).